A 478-amino-acid chain; its full sequence is Sorting nexin-4 (478 aa).

The segment covering 1 to 10 (MAVIDQHQDD) has biased composition (basic and acidic residues). The tract at residues 1-56 (MAVIDQHQDDFSNVSWNTDEHTAAESSSSVTATEFDDTERNGHNAYESDAPGSDGQ) is disordered. The segment covering 24-33 (AESSSSVTAT) has biased composition (low complexity). One can recognise a PX domain in the interval 58 to 180 (VLDCVVSEPL…IFLESPDWNA (123 aa)). Residues Arg-101, Thr-103, Lys-127, and Arg-146 each coordinate a 1,2-diacyl-sn-glycero-3-phospho-(1D-myo-inositol-3-phosphate). The segment at 459 to 478 (EGVSGTRSTGVEPPGRRLAD) is disordered.

This sequence belongs to the sorting nexin family. Interacts with the mitochondrial prohibitin complex subunits PHB1 and PHB2; the interaction is direct and plays a role in mitophagy.

It is found in the cytoplasm. The protein resides in the cytosol. Its subcellular location is the preautophagosomal structure membrane. It localises to the endosome membrane. The protein localises to the mitochondrion membrane. It is found in the lipid droplet. Functionally, sorting nexin, involved in the separation or division of vacuoles throughout the entire life cycle of the cells. Involved in retrieval of late-Golgi SNAREs from post-Golgi endosomes to the trans-Golgi network, for cytoplasm to vacuole transport (Cvt), and autophagy of large cargos including mitophagy, pexophagy and glycophagy. Required for the switch to necrotrophic growth. The sequence is that of Sorting nexin-4 from Colletotrichum higginsianum (strain IMI 349063) (Crucifer anthracnose fungus).